The following is a 364-amino-acid chain: Capsular polysaccharide phosphotransferase fcs1 (364 aa).

It belongs to the stealth family.

In terms of biological role, part of a group II capsule biosynthesis locus. The chain is Capsular polysaccharide phosphotransferase fcs1 (fcs1) from Haemophilus influenzae.